A 189-amino-acid polypeptide reads, in one-letter code: Ribosome maturation factor RimM (189 aa).

One can recognise a PRC barrel domain in the interval Asp113–Tyr189.

It belongs to the RimM family. In terms of assembly, binds ribosomal protein uS19.

Its subcellular location is the cytoplasm. In terms of biological role, an accessory protein needed during the final step in the assembly of 30S ribosomal subunit, possibly for assembly of the head region. Essential for efficient processing of 16S rRNA. May be needed both before and after RbfA during the maturation of 16S rRNA. It has affinity for free ribosomal 30S subunits but not for 70S ribosomes. The polypeptide is Ribosome maturation factor RimM (Delftia acidovorans (strain DSM 14801 / SPH-1)).